A 158-amino-acid polypeptide reads, in one-letter code: NAD(P)H-quinone oxidoreductase subunit N (158 aa).

The protein belongs to the complex I NdhN subunit family. As to quaternary structure, NDH-1 can be composed of about 15 different subunits; different subcomplexes with different compositions have been identified which probably have different functions.

The protein localises to the cellular thylakoid membrane. The catalysed reaction is a plastoquinone + NADH + (n+1) H(+)(in) = a plastoquinol + NAD(+) + n H(+)(out). It carries out the reaction a plastoquinone + NADPH + (n+1) H(+)(in) = a plastoquinol + NADP(+) + n H(+)(out). Functionally, NDH-1 shuttles electrons from an unknown electron donor, via FMN and iron-sulfur (Fe-S) centers, to quinones in the respiratory and/or the photosynthetic chain. The immediate electron acceptor for the enzyme in this species is believed to be plastoquinone. Couples the redox reaction to proton translocation, and thus conserves the redox energy in a proton gradient. Cyanobacterial NDH-1 also plays a role in inorganic carbon-concentration. The sequence is that of NAD(P)H-quinone oxidoreductase subunit N from Crocosphaera subtropica (strain ATCC 51142 / BH68) (Cyanothece sp. (strain ATCC 51142)).